A 506-amino-acid polypeptide reads, in one-letter code: Beta-glucosidase 13 (506 aa).

A signal peptide spans 1-25; the sequence is MAAAGEVVMLGGILLPLLLVVAVSG. Q49 contacts a beta-D-glucoside. A glycan (N-linked (GlcNAc...) asparagine) is linked at N118. A beta-D-glucoside-binding positions include H153 and 198–199; that span reads NE. E199 serves as the catalytic Proton donor. A disulfide bridge connects residues C219 and C226. N-linked (GlcNAc...) asparagine glycosylation occurs at N225. Y342 is a binding site for a beta-D-glucoside. 2 N-linked (GlcNAc...) asparagine glycosylation sites follow: N357 and N367. Residue E413 participates in a beta-D-glucoside binding. The Nucleophile role is filled by E413. A glycan (N-linked (GlcNAc...) asparagine) is linked at N421. A beta-D-glucoside contacts are provided by residues W462, 469 to 470, and F478; that span reads EW.

The protein belongs to the glycosyl hydrolase 1 family.

It carries out the reaction Hydrolysis of terminal, non-reducing beta-D-glucosyl residues with release of beta-D-glucose.. The chain is Beta-glucosidase 13 (BGLU13) from Oryza sativa subsp. japonica (Rice).